Consider the following 373-residue polypeptide: Chaperone protein DnaJ (373 aa).

One can recognise a J domain in the interval 4-68 (NYYQILGVSK…QKRAAYDRLG (65 aa)). The CR-type zinc finger occupies 136–214 (GIEKNISFSS…CHGMGRYHKQ (79 aa)). Positions 149, 152, 166, 169, 188, 191, 202, and 205 each coordinate Zn(2+). CXXCXGXG motif repeat units lie at residues 149–156 (CDTCHGSG), 166–173 (CDACSGVG), 188–195 (CHKCQGNG), and 202–209 (CKKCHGMG).

This sequence belongs to the DnaJ family. As to quaternary structure, homodimer. The cofactor is Zn(2+).

It is found in the cytoplasm. Its function is as follows. Participates actively in the response to hyperosmotic and heat shock by preventing the aggregation of stress-denatured proteins and by disaggregating proteins, also in an autonomous, DnaK-independent fashion. Unfolded proteins bind initially to DnaJ; upon interaction with the DnaJ-bound protein, DnaK hydrolyzes its bound ATP, resulting in the formation of a stable complex. GrpE releases ADP from DnaK; ATP binding to DnaK triggers the release of the substrate protein, thus completing the reaction cycle. Several rounds of ATP-dependent interactions between DnaJ, DnaK and GrpE are required for fully efficient folding. Also involved, together with DnaK and GrpE, in the DNA replication of plasmids through activation of initiation proteins. In Rickettsia africae (strain ESF-5), this protein is Chaperone protein DnaJ.